The chain runs to 145 residues: Aklanonic acid methyl ester cyclase DnrD (145 aa).

Gln-106 provides a ligand contact to substrate.

It belongs to the polyketide cyclase DnrD family. As to quaternary structure, homotetramer.

It catalyses the reaction methyl aklanonate = aklaviketone. The protein operates within antibiotic biosynthesis; daunorubicin biosynthesis. It participates in antibiotic biosynthesis; carminomycin biosynthesis. Its pathway is antibiotic biosynthesis; rhodomycin biosynthesis. It functions in the pathway antibiotic biosynthesis; aclacinomycin biosynthesis. Functionally, involved in the biosynthesis of aklavinone which is an important precursor common to the formation of the clinically significant anthracyclines such as carminomycin, daunorubicin (daunomycin), rhodomycin, aclacinomycin T (aklavin) and aclacinomycin A (aclarubicin). These compounds are aromatic polyketide antibiotics that exhibit high cytotoxicity and are widely applied in the chemotherapy of a variety of cancers. Catalyzes the cyclization of aklanonic acid methyl ester to yield aklaviketone presumably via an intramolecular aldol condensation mechanism, although water is not eliminated. The chain is Aklanonic acid methyl ester cyclase DnrD (dnrD) from Streptomyces peucetius.